The primary structure comprises 392 residues: Enoyl-[acyl-carrier-protein] reductase [NADH] (392 aa).

NAD(+)-binding positions include 46-51, 72-73, 108-109, and 136-137; these read GSSSGY, LE, DA, and VA. Position 225 (Tyr225) interacts with substrate. Tyr235 acts as the Proton donor in catalysis. Residues Lys244 and 273-275 each bind NAD(+); that span reads LVT.

Belongs to the TER reductase family. As to quaternary structure, monomer.

It catalyses the reaction a 2,3-saturated acyl-[ACP] + NAD(+) = a (2E)-enoyl-[ACP] + NADH + H(+). Its pathway is lipid metabolism; fatty acid biosynthesis. Functionally, involved in the final reduction of the elongation cycle of fatty acid synthesis (FAS II). Catalyzes the reduction of a carbon-carbon double bond in an enoyl moiety that is covalently linked to an acyl carrier protein (ACP). This chain is Enoyl-[acyl-carrier-protein] reductase [NADH], found in Streptomyces avermitilis (strain ATCC 31267 / DSM 46492 / JCM 5070 / NBRC 14893 / NCIMB 12804 / NRRL 8165 / MA-4680).